Here is a 96-residue protein sequence, read N- to C-terminus: Small, acid-soluble spore protein gamma-type (96 aa).

Over residues 1 to 15 (MNTKNFTPQESRTNA) the composition is skewed to polar residues. A disordered region spans residues 1 to 96 (MNTKNFTPQE…SEAKKRNNQQ (96 aa)). The segment covering 16–27 (QQVRQQNQQSAQ) has biased composition (low complexity). Positions 28–41 (GTSSGFATEFASET) are enriched in polar residues. 2 consecutive repeats follow at residues 28-52 (GTSS…QNQQ) and 61-87 (GATA…NQQS). 2 stretches are compositionally biased toward low complexity: residues 42–57 (NAQQ…AQAN) and 76–86 (NVQQVRQQNQQ).

It belongs to the gamma-type SASP family.

Functionally, SASP are proteins degraded in the first minutes of spore germination and provide amino acids for both new protein synthesis and metabolism. These proteins may be involved in dormant spore's high resistance to UV light. This chain is Small, acid-soluble spore protein gamma-type, found in Laceyella sacchari (Thermoactinomyces thalpophilus).